A 561-amino-acid chain; its full sequence is Potassium-transporting ATPase potassium-binding subunit (561 aa).

10 helical membrane-spanning segments follow: residues 4–24 (IVMQDVFFVVLLLVLAVPLGI), 65–85 (AVSVLAFSAVGFVFVMAVLML), 133–153 (IGLTVQNFVSAATGIAVLFAV), 177–197 (LYILLPLSLVLALLLVSQGVV), 253–273 (FTNLIEMLAILLIPVALVVMF), 285–305 (AIMTAMMIVFVIGVVAITISE), 380–400 (GLYGMIGFIILTVFIAGLLVG), 417–437 (MVCLLILVPPLLTLFGTAVAV), 484–504 (MVGAVMMLLARFIPLVAALYL), and 528–548 (FIGLLIGVVVLVGALSFLPAL).

It belongs to the KdpA family. As to quaternary structure, the system is composed of three essential subunits: KdpA, KdpB and KdpC.

It localises to the cell membrane. In terms of biological role, part of the high-affinity ATP-driven potassium transport (or Kdp) system, which catalyzes the hydrolysis of ATP coupled with the electrogenic transport of potassium into the cytoplasm. This subunit binds the extracellular potassium ions and delivers the ions to the membrane domain of KdpB through an intramembrane tunnel. In Listeria monocytogenes serotype 4a (strain HCC23), this protein is Potassium-transporting ATPase potassium-binding subunit.